We begin with the raw amino-acid sequence, 219 residues long: Mucosal pentraxin (219 aa).

Residues Met1–Ser19 form the signal peptide. Residues Asp24–Thr219 enclose the Pentraxin (PTX) domain. The cysteines at positions 55 and 114 are disulfide-linked. Ca(2+) is bound by residues Asp77, Asn78, Glu155, Gln156, Asp157, and Gln167.

The protein belongs to the pentraxin family. Homopentamer. Pentraxin (or pentaxin) have a discoid arrangement of 5 non-covalently bound subunits. The cofactor is Ca(2+). In terms of tissue distribution, expression is restricted to small intestine, stomach and colon. Within colon, expressed in epithelial cells located within the lower to mid region of transverse and distal crypts, but not in proximal colon.

It is found in the secreted. The chain is Mucosal pentraxin (Mptx1) from Rattus norvegicus (Rat).